The chain runs to 250 residues: Probable transcriptional regulatory protein Emin_1151 (250 aa).

Belongs to the TACO1 family.

It localises to the cytoplasm. The polypeptide is Probable transcriptional regulatory protein Emin_1151 (Elusimicrobium minutum (strain Pei191)).